A 248-amino-acid polypeptide reads, in one-letter code: PF03932 family protein CutC (248 aa).

This sequence belongs to the CutC family. In terms of assembly, homodimer.

It is found in the cytoplasm. The chain is PF03932 family protein CutC from Shigella dysenteriae serotype 1 (strain Sd197).